The sequence spans 315 residues: Zinc finger transcription factor ref-2 (315 aa).

The C2H2-type 1; atypical zinc finger occupies valine 83–histidine 112. Residues lysine 124–histidine 146 form a C2H2-type 2; degenerate zinc finger. C2H2-type zinc fingers lie at residues phenylalanine 152–histidine 174, phenylalanine 180–histidine 204, and tyrosine 210–histidine 234. Residues serine 225 to proline 270 form a disordered region. Over residues valine 233–serine 249 the composition is skewed to basic and acidic residues. The span at aspartate 251–proline 270 shows a compositional bias: polar residues.

In terms of assembly, interacts with TCF transcription factor pop-1; the interaction is direct and facilitates transcriptional activation; transcription may be repressed by beta-catenin/sys-1.

It is found in the nucleus. Its subcellular location is the cytoplasm. In terms of biological role, transcription factor. Modulates expression of target genes by binding to regulatory elements. Required for normal cell division timing and cell positioning in anterior lineages, acting in a cell-autonomous manner. Required for development, fusion and fate of cells of the ventral epidermis, the Pn.p cells, during larval development; acts in concert with homeobox genes lin-39 and mab-5. Required for the specification of the AIY interneuron. In complex with TCF transcription factor pop-1, positively modulates expression of LIM/homeobox protein ttx-3 in anterior daughter cells of the SMDD/AIY neuron lineage. In Caenorhabditis elegans, this protein is Zinc finger transcription factor ref-2.